Reading from the N-terminus, the 173-residue chain is Crossover junction endodeoxyribonuclease RuvC (173 aa).

Residues Asp-8, Glu-67, and Asp-139 contribute to the active site. Asp-8, Glu-67, and Asp-139 together coordinate Mg(2+).

It belongs to the RuvC family. As to quaternary structure, homodimer which binds Holliday junction (HJ) DNA. The HJ becomes 2-fold symmetrical on binding to RuvC with unstacked arms; it has a different conformation from HJ DNA in complex with RuvA. In the full resolvosome a probable DNA-RuvA(4)-RuvB(12)-RuvC(2) complex forms which resolves the HJ. Mg(2+) is required as a cofactor.

It localises to the cytoplasm. The enzyme catalyses Endonucleolytic cleavage at a junction such as a reciprocal single-stranded crossover between two homologous DNA duplexes (Holliday junction).. Its function is as follows. The RuvA-RuvB-RuvC complex processes Holliday junction (HJ) DNA during genetic recombination and DNA repair. Endonuclease that resolves HJ intermediates. Cleaves cruciform DNA by making single-stranded nicks across the HJ at symmetrical positions within the homologous arms, yielding a 5'-phosphate and a 3'-hydroxyl group; requires a central core of homology in the junction. The consensus cleavage sequence is 5'-(A/T)TT(C/G)-3'. Cleavage occurs on the 3'-side of the TT dinucleotide at the point of strand exchange. HJ branch migration catalyzed by RuvA-RuvB allows RuvC to scan DNA until it finds its consensus sequence, where it cleaves and resolves the cruciform DNA. The polypeptide is Crossover junction endodeoxyribonuclease RuvC (Salmonella agona (strain SL483)).